A 388-amino-acid chain; its full sequence is Protein-glutamate methylesterase/protein-glutamine glutaminase (388 aa).

The Response regulatory domain occupies Arg20–His138. The residue at position 71 (Asp71) is a 4-aspartylphosphate. The region spanning Pro193–Asp386 is the CheB-type methylesterase domain. Catalysis depends on residues Ser204, His232, and Asp328.

It belongs to the CheB family. Phosphorylated by CheA. Phosphorylation of the N-terminal regulatory domain activates the methylesterase activity.

It localises to the cytoplasm. The catalysed reaction is [protein]-L-glutamate 5-O-methyl ester + H2O = L-glutamyl-[protein] + methanol + H(+). The enzyme catalyses L-glutaminyl-[protein] + H2O = L-glutamyl-[protein] + NH4(+). Involved in chemotaxis. Part of a chemotaxis signal transduction system that modulates chemotaxis in response to various stimuli. Catalyzes the demethylation of specific methylglutamate residues introduced into the chemoreceptors (methyl-accepting chemotaxis proteins or MCP) by CheR. Also mediates the irreversible deamidation of specific glutamine residues to glutamic acid. The chain is Protein-glutamate methylesterase/protein-glutamine glutaminase from Rhodopseudomonas palustris (strain HaA2).